The following is a 248-amino-acid chain: ATP synthase subunit a, chloroplastic (248 aa).

Transmembrane regions (helical) follow at residues 37–57 (GQVL…AFLG), 96–116 (VPFV…GALV), 135–155 (INTT…AGFH), 200–220 (LVVA…MMFL), and 221–241 (GLFT…AYIG).

Belongs to the ATPase A chain family. As to quaternary structure, F-type ATPases have 2 components, CF(1) - the catalytic core - and CF(0) - the membrane proton channel. CF(1) has five subunits: alpha(3), beta(3), gamma(1), delta(1), epsilon(1). CF(0) has four main subunits: a, b, b' and c.

The protein resides in the plastid. Its subcellular location is the chloroplast thylakoid membrane. Its function is as follows. Key component of the proton channel; it plays a direct role in the translocation of protons across the membrane. The polypeptide is ATP synthase subunit a, chloroplastic (Staurastrum punctulatum (Green alga)).